Here is a 447-residue protein sequence, read N- to C-terminus: tRNA-2-methylthio-N(6)-dimethylallyladenosine synthase (447 aa).

Residues 8–126 enclose the MTTase N-terminal domain; that stretch reads KKVVTLAYGC…FQRLLEEAEE (119 aa). Residues C17, C53, C87, C162, C166, and C169 each coordinate [4Fe-4S] cluster. The 231-residue stretch at 148–378 folds into the Radical SAM core domain; that stretch reads AKGKLKAYVN…ITVQNAQSLA (231 aa). The TRAM domain maps to 381–444; the sequence is QEMIGKTCEV…SWTLFGECRA (64 aa).

This sequence belongs to the methylthiotransferase family. MiaB subfamily. As to quaternary structure, monomer. The cofactor is [4Fe-4S] cluster.

Its subcellular location is the cytoplasm. The enzyme catalyses N(6)-dimethylallyladenosine(37) in tRNA + (sulfur carrier)-SH + AH2 + 2 S-adenosyl-L-methionine = 2-methylsulfanyl-N(6)-dimethylallyladenosine(37) in tRNA + (sulfur carrier)-H + 5'-deoxyadenosine + L-methionine + A + S-adenosyl-L-homocysteine + 2 H(+). Functionally, catalyzes the methylthiolation of N6-(dimethylallyl)adenosine (i(6)A), leading to the formation of 2-methylthio-N6-(dimethylallyl)adenosine (ms(2)i(6)A) at position 37 in tRNAs that read codons beginning with uridine. This Desulfitobacterium hafniense (strain Y51) protein is tRNA-2-methylthio-N(6)-dimethylallyladenosine synthase.